A 328-amino-acid polypeptide reads, in one-letter code: CMP-N-acetylneuraminate-beta-galactosamide-alpha-2,3-sialyltransferase 4 (328 aa).

At 1–7 (MCPAGWK) the chain is on the cytoplasmic side. A helical; Signal-anchor for type II membrane protein transmembrane segment spans residues 8 to 25 (LLAMLALVLVVMVWYSIS). Topologically, residues 26 to 328 (REDSFYFPIP…MGAVKNLTSF (303 aa)) are lumenal. N-linked (GlcNAc...) asparagine glycosylation is found at Asn56, Asn126, Asn305, and Asn324. The cysteines at positions 115 and 268 are disulfide-linked.

It belongs to the glycosyltransferase 29 family. In terms of processing, the soluble form derives from the membrane form by proteolytic processing.

It is found in the golgi apparatus. The protein resides in the golgi stack membrane. It localises to the secreted. The enzyme catalyses a beta-D-galactosyl-(1-&gt;3)-N-acetyl-beta-D-galactosaminyl derivative + CMP-N-acetyl-beta-neuraminate = an N-acetyl-alpha-neuraminyl-(2-&gt;3)-beta-D-galactosyl-(1-&gt;3)-N-acetyl-beta-D-galactosaminyl derivative + CMP + H(+). It carries out the reaction a beta-D-galactosyl-(1-&gt;3)-N-acetyl-alpha-D-galactosaminyl derivative + CMP-N-acetyl-beta-neuraminate = an N-acetyl-alpha-neuraminyl-(2-&gt;3)-beta-D-galactosyl-(1-&gt;3)-N-acetyl-alpha-D-galactosaminyl derivative + CMP + H(+). It catalyses the reaction a beta-D-galactosyl-(1-&gt;4)-N-acetyl-beta-D-glucosaminyl derivative + CMP-N-acetyl-beta-neuraminate = an N-acetyl-alpha-neuraminyl-(2-&gt;3)-beta-D-galactosyl-(1-&gt;4)-N-acetyl-beta-D-glucosaminyl derivative + CMP + H(+). The catalysed reaction is a ganglioside GM1 (d18:1(4E)) + CMP-N-acetyl-beta-neuraminate = a ganglioside GD1a (d18:1(4E)) + CMP + H(+). The enzyme catalyses a ganglioside GA1 (d18:1(4E)) + CMP-N-acetyl-beta-neuraminate = a ganglioside GM1b (d18:1(4E)) + CMP + H(+). It carries out the reaction a ganglioside GT1c (d18:1(4E)) + CMP-N-acetyl-beta-neuraminate = a ganglioside GQ1c (d18:1(4E)) + CMP + H(+). It catalyses the reaction a neolactoside nLc4Cer + CMP-N-acetyl-beta-neuraminate = a neolactoside IV(3)-alpha-NeuAc-nLc4Cer + CMP + H(+). The catalysed reaction is a neolactoside nLc4Cer(d18:1(4E)) + CMP-N-acetyl-beta-neuraminate = a neolactoside IV(3)-alpha-NeuAc-nLc4Cer(d18:1(4E)) + CMP + H(+). It functions in the pathway protein modification; protein glycosylation. It participates in glycolipid biosynthesis. Its function is as follows. A beta-galactoside alpha2-3 sialyltransferase involved in terminal sialylation of glycoproteins and glycolipids. Catalyzes the transfer of sialic acid (N-acetyl-neuraminic acid; Neu5Ac) from the nucleotide sugar donor CMP-Neu5Ac onto acceptor Galbeta-(1-&gt;3)-GalNAc- and Galbeta-(1-&gt;4)-GlcNAc-terminated glycoconjugates through an alpha2-3 linkage. Plays a major role in hemostasis. Responsible for sialylation of plasma VWF/von Willebrand factor, preventing its recognition by asialoglycoprotein receptors (ASGPR) and subsequent clearance. Regulates ASGPR-mediated clearance of platelets. Participates in the biosynthesis of the sialyl Lewis X epitopes, both on O- and N-glycans, which are recognized by SELE/E-selectin, SELP/P-selectin and SELL/L-selectin. Essential for selectin-mediated rolling and adhesion of leukocytes during extravasation. Contributes to adhesion and transendothelial migration of neutrophils likely through terminal sialylation of CXCR2. In glycosphingolipid biosynthesis, sialylates GM1 and GA1 gangliosides to form GD1a and GM1b, respectively. Metabolizes brain c-series ganglioside GT1c forming GQ1c. Synthesizes ganglioside LM1 (IV3Neu5Ac-nLc4Cer), a major structural component of peripheral nerve myelin. The sequence is that of CMP-N-acetylneuraminate-beta-galactosamide-alpha-2,3-sialyltransferase 4 (ST3GAL4) from Pan troglodytes (Chimpanzee).